Consider the following 433-residue polypeptide: MKPNLNHRSNEPNCKGVEILSIGTELLLGNIVNTNAQWISEELSALGLNHFRQSTIGDNSKRISNLIKEISLRSDLLITTGGLGPTPDDLTTEAIAKSFNVTLYERESLWDEIKKKLSLSSSIQNNSSLKKQCFFPKDAQIIHNPRGTAPGMIWKPKKGFTILTFPGVPSEMKVMWKETAIDYIQKNFSDGYIFFSNTLNFSGIGESKVSEKIDNLLKLKNPTVAPYANLGELKLRITARATNELQAKNLIKPVKEELKKEFSKFIFGEDNETLSSVLIKELLKRKESLGFAESCTGGLLSSTITKVSGSSQVFKGSIISYSNELKQSLLNIPEDRIKKYGAVSEEIAQDMTINAREKLNSDWSIAISGIAGPSGGSKEKPVGIVYISIAGPNNHITNIKKIFSSTRNRVEIQRLSVNVCLNSLRLILLSKSK.

The protein belongs to the CinA family.

This chain is CinA-like protein, found in Prochlorococcus marinus (strain MIT 9515).